We begin with the raw amino-acid sequence, 557 residues long: Formate--tetrahydrofolate ligase (557 aa).

44-51 (TPLGEGKS) serves as a coordination point for ATP.

It belongs to the formate--tetrahydrofolate ligase family.

The catalysed reaction is (6S)-5,6,7,8-tetrahydrofolate + formate + ATP = (6R)-10-formyltetrahydrofolate + ADP + phosphate. The protein operates within one-carbon metabolism; tetrahydrofolate interconversion. The polypeptide is Formate--tetrahydrofolate ligase (Desulfotalea psychrophila (strain LSv54 / DSM 12343)).